A 165-amino-acid chain; its full sequence is MDVALKLLLLAALTLLASAQTPIDYKDLSTTLQEHIDKALEEGNRKFGGRHHVALDSFVTPAVTRQSILNVNVFLKVTTCMKTRSYKHRPECNTQKRSTPKINCLVCKMKNGTELVHCARKIDILHGEHKEIRDNCDVTRIGVSSLMAQTMPDDYRKQVGCLGCI.

The signal sequence occupies residues 1 to 19; it reads MDVALKLLLLAALTLLASA. Disulfide bonds link C80–C92 and C104–C118.

Involved in hypoxia tolerance. The protein is Cystatin-like protein of Clarias batrachus (Walking catfish).